A 602-amino-acid chain; its full sequence is DNA mismatch repair protein MutL (602 aa).

The disordered stretch occupies residues 337–367; that stretch reads KRPFPGSSTNYSGIQQDTKKQESDNPEKARG. The span at 342-352 shows a compositional bias: polar residues; it reads GSSTNYSGIQQ. Over residues 353-367 the composition is skewed to basic and acidic residues; it reads DTKKQESDNPEKARG.

Belongs to the DNA mismatch repair MutL/HexB family.

This protein is involved in the repair of mismatches in DNA. It is required for dam-dependent methyl-directed DNA mismatch repair. May act as a 'molecular matchmaker', a protein that promotes the formation of a stable complex between two or more DNA-binding proteins in an ATP-dependent manner without itself being part of a final effector complex. The protein is DNA mismatch repair protein MutL of Kosmotoga olearia (strain ATCC BAA-1733 / DSM 21960 / TBF 19.5.1).